Here is a 164-residue protein sequence, read N- to C-terminus: MADENLQPLFQIQRVYLKDLSLEQPNSPAIFLEQEQPTIEVAVDVGAQPLAEGIFESTVTITVTAKIADKIAFLVEGKQAGIFEIRNIPDEQLDPLLGIGCPNVIYPYLRANIADAITRAGFPPVHLSEINFEVFYQQRLEALAQQQADNSSGIVMADGSAARH.

This sequence belongs to the SecB family. As to quaternary structure, homotetramer, a dimer of dimers. One homotetramer interacts with 1 SecA dimer.

The protein resides in the cytoplasm. In terms of biological role, one of the proteins required for the normal export of preproteins out of the cell cytoplasm. It is a molecular chaperone that binds to a subset of precursor proteins, maintaining them in a translocation-competent state. It also specifically binds to its receptor SecA. The polypeptide is Protein-export protein SecB (Janthinobacterium sp. (strain Marseille) (Minibacterium massiliensis)).